Here is a 175-residue protein sequence, read N- to C-terminus: MRLVLSGASSFTSNLFCSSQQVNGRGKELKNPISLNHNKDLDFLLKKLAPPLTAVLLAVSPICFPPESLGQTLDIQRGATLFNRACIGCHDTGGNIIQPGATLFTKDLERNGVDTEEEIYRVTYFGKGRMPGFGEKCTPRGQCTFGPRLQDEEIKLLAEFVKFQADQGWPTVSTD.

Heme c is bound by residues Cys-86, Cys-89, and His-90. 98–102 provides a ligand contact to heme; the sequence is QPGAT. Residue Met-130 participates in heme c binding.

Belongs to the cytochrome c family. PetJ subfamily. In terms of assembly, monomer. Interacts in vitro with LTO1. In terms of processing, binds 1 heme c group covalently per subunit.

The protein resides in the plastid. The protein localises to the chloroplast thylakoid lumen. Functionally, functions as an electron carrier between membrane-bound cytochrome b6-f and photosystem I in oxygenic photosynthesis. In Arabidopsis thaliana (Mouse-ear cress), this protein is Cytochrome c6, chloroplastic (PETJ).